The following is a 276-amino-acid chain: Proteasome subunit beta type-8 (276 aa).

Residues 1 to 33 (MALLDVCGAPRGQRPESALPVAGSGRRSDPGHY) form a disordered region. Positions 1–72 (MALLDVCGAP…RNVQIEMAHG (72 aa)) are cleaved as a propeptide — removed in mature form. D5 is subject to Phosphothreonine. The Nucleophile role is filled by T73.

It belongs to the peptidase T1B family. In terms of assembly, the 26S proteasome consists of a 20S proteasome core and two 19S regulatory subunits. The 20S proteasome core is composed of 28 subunits that are arranged in four stacked rings, resulting in a barrel-shaped structure. The two end rings are each formed by seven alpha subunits, and the two central rings are each formed by seven beta subunits. The catalytic chamber with the active sites is on the inside of the barrel. Component of the immunoproteasome, where it displaces the equivalent housekeeping subunit PSMB5. Component of the spermatoproteasome, a form of the proteasome specifically found in testis. Directly interacts with POMP. Interacts with TAP1. (Microbial infection) Interacts with HIV-1 TAT protein. Post-translationally, autocleaved. The resulting N-terminal Thr residue of the mature subunit is responsible for the nucleophile proteolytic activity.

It localises to the cytoplasm. Its subcellular location is the nucleus. It carries out the reaction Cleavage of peptide bonds with very broad specificity.. Its function is as follows. The proteasome is a multicatalytic proteinase complex which is characterized by its ability to cleave peptides with Arg, Phe, Tyr, Leu, and Glu adjacent to the leaving group at neutral or slightly basic pH. The proteasome has an ATP-dependent proteolytic activity. This subunit is involved in antigen processing to generate class I binding peptides. Replacement of PSMB5 by PSMB8 increases the capacity of the immunoproteasome to cleave model peptides after hydrophobic and basic residues. Involved in the generation of spliced peptides resulting from the ligation of two separate proteasomal cleavage products that are not contiguous in the parental protein. Acts as a major component of interferon gamma-induced sensitivity. Plays a key role in apoptosis via the degradation of the apoptotic inhibitor MCL1. May be involved in the inflammatory response pathway. In cancer cells, substitution of isoform 1 (E2) by isoform 2 (E1) results in immunoproteasome deficiency. Required for the differentiation of preadipocytes into adipocytes. The chain is Proteasome subunit beta type-8 (PSMB8) from Homo sapiens (Human).